The chain runs to 1173 residues: Paired amphipathic helix protein Sin3-like 6 (1173 aa).

Residues 40 to 75 (NQSAGESGRRLKMKRAREDVHTDTQKRKPEVSSRGE) form a disordered region. Over residues 55 to 75 (AREDVHTDTQKRKPEVSSRGE) the composition is skewed to basic and acidic residues. 2 PAH domains span residues 79-148 (LPRT…LPKG) and 162-232 (IRVD…LPNC). Disordered stretches follow at residues 236–337 (APST…TTKY), 655–697 (TASG…TAQP), and 740–813 (KHEL…ENNK). 2 stretches are compositionally biased toward basic and acidic residues: residues 264-276 (CKLEDYSGHSDQR) and 301-319 (RDYENREDTETDTADRTEK). A compositionally biased stretch (polar residues) spans 320 to 337 (SAASGSQDIGNHKSTTKY). Residues 750–765 (PTASREQSNFEVNGQN) show a composition bias toward polar residues. Basic and acidic residues predominate over residues 778-810 (RSNKDKQSCDKKGAKNKTRAEDDKQENCHKLSE).

It is found in the nucleus. In terms of biological role, acts as a transcriptional repressor. Plays roles in regulating gene expression and genome stability. This Arabidopsis thaliana (Mouse-ear cress) protein is Paired amphipathic helix protein Sin3-like 6 (SNL6).